The sequence spans 275 residues: Expansin-A23 (275 aa).

The first 27 residues, 1–27 (MNLLGKMIYVEGFMMIMATLLVSMSYG), serve as a signal peptide directing secretion. The Expansin-like EG45 domain maps to 72 to 182 (QGACGYGDLF…RRISCARTGG (111 aa)). The 80-residue stretch at 192–271 (YFLMILPYNV…NWGFGQTFDG (80 aa)) folds into the Expansin-like CBD domain.

It belongs to the expansin family. Expansin A subfamily.

The protein localises to the secreted. It is found in the cell wall. Its subcellular location is the membrane. Causes loosening and extension of plant cell walls by disrupting non-covalent bonding between cellulose microfibrils and matrix glucans. No enzymatic activity has been found. The sequence is that of Expansin-A23 (EXPA23) from Arabidopsis thaliana (Mouse-ear cress).